Here is a 438-residue protein sequence, read N- to C-terminus: Phosphatidylserine decarboxylase proenzyme 1, mitochondrial (438 aa).

The transit peptide at 1-21 directs the protein to the mitochondrion; sequence MRRFRVWPPSPSPWPLLASRP. The Mitochondrial matrix segment spans residues 22–48; the sequence is CPHSHHHRSPFHASANSGARQGNFILP. Residues 49 to 67 traverse the membrane as a helical segment; the sequence is GATAATLVMFGILHARRMY. Residues 68-438 are Mitochondrial intermembrane-facing; it reads EDQKVVERKE…EAIGRWTSRE (371 aa). Residues Asp-173, His-273, and Ser-387 each act as charge relay system; for autoendoproteolytic cleavage activity in the active site. The Schiff-base intermediate with substrate; via pyruvic acid; for decarboxylase activity role is filled by Ser-387. Position 387 is a pyruvic acid (Ser); by autocatalysis (Ser-387).

The protein belongs to the phosphatidylserine decarboxylase family. PSD-B subfamily. Eukaryotic type I sub-subfamily. In terms of assembly, heterodimer of a large membrane-associated beta subunit and a small pyruvoyl-containing alpha subunit. Pyruvate serves as cofactor. Is synthesized initially as an inactive proenzyme. Formation of the active enzyme involves a self-maturation process in which the active site pyruvoyl group is generated from an internal serine residue via an autocatalytic post-translational modification. Two non-identical subunits are generated from the proenzyme in this reaction, and the pyruvate is formed at the N-terminus of the alpha chain, which is derived from the carboxyl end of the proenzyme. The autoendoproteolytic cleavage occurs by a canonical serine protease mechanism, in which the side chain hydroxyl group of the serine supplies its oxygen atom to form the C-terminus of the beta chain, while the remainder of the serine residue undergoes an oxidative deamination to produce ammonia and the pyruvoyl prosthetic group on the alpha chain. During this reaction, the Ser that is part of the protease active site of the proenzyme becomes the pyruvoyl prosthetic group, which constitutes an essential element of the active site of the mature decarboxylase.

Its subcellular location is the mitochondrion inner membrane. The catalysed reaction is a 1,2-diacyl-sn-glycero-3-phospho-L-serine + H(+) = a 1,2-diacyl-sn-glycero-3-phosphoethanolamine + CO2. It functions in the pathway phospholipid metabolism; phosphatidylethanolamine biosynthesis; phosphatidylethanolamine from CDP-diacylglycerol: step 2/2. Catalyzes the formation of phosphatidylethanolamine (PtdEtn) from phosphatidylserine (PtdSer). Plays a central role in phospholipid metabolism and in the interorganelle trafficking of phosphatidylserine. This chain is Phosphatidylserine decarboxylase proenzyme 1, mitochondrial (PSD1), found in Oryza sativa subsp. japonica (Rice).